The following is a 585-amino-acid chain: uncharacterized protein (585 aa).

Over residues 1 to 18 the composition is skewed to polar residues; it reads MSALSTKLEPTNSYSESL. Residues 1–23 are disordered; that stretch reads MSALSTKLEPTNSYSESLPPQRR.

The protein belongs to the protein kinase superfamily. ADCK protein kinase family.

This is an uncharacterized protein from Synechocystis sp. (strain ATCC 27184 / PCC 6803 / Kazusa).